The primary structure comprises 305 residues: tRNA uridine(34) hydroxylase (305 aa).

A Rhodanese domain is found at 126–220 (CDPEVTVIDT…YLEEVPAQES (95 aa)). Residue C180 is the Cysteine persulfide intermediate of the active site.

The protein belongs to the TrhO family.

The catalysed reaction is uridine(34) in tRNA + AH2 + O2 = 5-hydroxyuridine(34) in tRNA + A + H2O. Its function is as follows. Catalyzes oxygen-dependent 5-hydroxyuridine (ho5U) modification at position 34 in tRNAs. This is tRNA uridine(34) hydroxylase from Nostoc punctiforme (strain ATCC 29133 / PCC 73102).